Here is a 392-residue protein sequence, read N- to C-terminus: p21-activated protein kinase-interacting protein 1 (392 aa).

WD repeat units lie at residues 33–72 (VADFTHHAHTASLSAVAVNSRFVVTGSKDETIHIYDMKKK), 73–113 (IEHG…AKKW), 114–155 (ECLK…LVEG), 156–195 (RSAFIKNIKQNAHIVEWSPRGEQYVVIIQNKIDIYQLDTA), 196–235 (SISGTITNEKRISSVKFLSESVLAVAGDEEVIRFFDCDSL), and 236–275 (VCLCEFKAHENRVKDMFSFEIPEHHVIVSASSDGFIKMWK). The interval 312–392 (SLPPAAEPSP…RKKKKIKTMQ (81 aa)) is disordered. Ser320 bears the Phosphoserine mark. The segment covering 325–345 (EQSKIGKKEPGDTVHKEEKRS) has biased composition (basic and acidic residues). The segment covering 381-392 (KKRKKKKIKTMQ) has biased composition (basic residues).

In terms of assembly, interacts with PAK1. Expressed in brain, colon, heart, kidney, liver, lung, muscle, peripheral blood leukocytes, placenta, small intestine, spleen and thymus.

It is found in the nucleus. The protein resides in the nucleolus. In terms of biological role, negatively regulates the PAK1 kinase. PAK1 is a member of the PAK kinase family, which has been shown to play a positive role in the regulation of signaling pathways involving MAPK8 and RELA. PAK1 exists as an inactive homodimer, which is activated by binding of small GTPases such as CDC42 to an N-terminal regulatory domain. PAK1IP1 also binds to the N-terminus of PAK1, and inhibits the specific activation of PAK1 by CDC42. May be involved in ribosomal large subunit assembly. The protein is p21-activated protein kinase-interacting protein 1 (PAK1IP1) of Homo sapiens (Human).